Consider the following 253-residue polypeptide: Ribonuclease HII (253 aa).

In terms of domain architecture, RNase H type-2 spans 70–253; sequence PLVAGIDEVG…RSFSPVQNAL (184 aa). Asp-76, Glu-77, and Asp-168 together coordinate a divalent metal cation.

It belongs to the RNase HII family. Requires Mn(2+) as cofactor. Mg(2+) serves as cofactor.

The protein resides in the cytoplasm. The catalysed reaction is Endonucleolytic cleavage to 5'-phosphomonoester.. In terms of biological role, endonuclease that specifically degrades the RNA of RNA-DNA hybrids. This chain is Ribonuclease HII, found in Latilactobacillus sakei subsp. sakei (strain 23K) (Lactobacillus sakei subsp. sakei).